The following is a 66-amino-acid chain: MAKGKDARVTIILECTSCLRNRVNKESRGISRYITQKNRHNTPSRLELRKFCPSCYKHTIHGELKK.

The protein belongs to the bacterial ribosomal protein bL33 family.

The protein localises to the plastid. It is found in the chloroplast. In Morus indica (Mulberry), this protein is Large ribosomal subunit protein bL33c.